Reading from the N-terminus, the 277-residue chain is Small ribosomal subunit protein uS2 (277 aa).

Residues Ala-255–Gly-277 are disordered. Residues Ala-257–Gly-277 are compositionally biased toward low complexity.

This sequence belongs to the universal ribosomal protein uS2 family.

The chain is Small ribosomal subunit protein uS2 from Mycobacteroides abscessus (strain ATCC 19977 / DSM 44196 / CCUG 20993 / CIP 104536 / JCM 13569 / NCTC 13031 / TMC 1543 / L948) (Mycobacterium abscessus).